The primary structure comprises 251 residues: Chlorophyll a-b binding protein 4, chloroplastic (251 aa).

Ser35 carries the post-translational modification Phosphoserine. A chlorophyll b-binding site is contributed by Trp57. Chlorophyll a-binding residues include Phe77 and Glu96. Chlorophyll b is bound at residue Arg101. 2 consecutive transmembrane segments (helical) span residues 102 to 122 and 135 to 155; these read WAML…IGII and YFAS…YVEI. Chlorophyll b is bound by residues Ser138, Val144, Glu154, and Arg157. Chlorophyll a is bound by residues Lys204, Glu205, Asn208, Arg210, Gln222, and His237.

It belongs to the light-harvesting chlorophyll a/b-binding (LHC) protein family. In terms of assembly, the LHC complex consists of chlorophyll a-b binding proteins. Red-emitting heterodimer with LHCA1. Binds at least 14 chlorophylls (8 Chl-a and 6 Chl-b) and carotenoids such as lutein and neoxanthin. is required as a cofactor. Post-translationally, photoregulated by reversible phosphorylation of its threonine residues.

The protein localises to the plastid. It is found in the chloroplast thylakoid membrane. In terms of biological role, the light-harvesting complex (LHC) functions as a light receptor, it captures and delivers excitation energy to photosystems with which it is closely associated. The protein is Chlorophyll a-b binding protein 4, chloroplastic of Arabidopsis thaliana (Mouse-ear cress).